The sequence spans 127 residues: Large ribosomal subunit protein bL19 (127 aa).

The protein belongs to the bacterial ribosomal protein bL19 family.

In terms of biological role, this protein is located at the 30S-50S ribosomal subunit interface and may play a role in the structure and function of the aminoacyl-tRNA binding site. This is Large ribosomal subunit protein bL19 from Roseobacter denitrificans (strain ATCC 33942 / OCh 114) (Erythrobacter sp. (strain OCh 114)).